The chain runs to 247 residues: Carboxy-S-adenosyl-L-methionine synthase (247 aa).

S-adenosyl-L-methionine-binding positions include Tyr40, 65–67, 90–91, 122–123, Asn137, and Arg204; these read GSS, DN, and DI.

The protein belongs to the class I-like SAM-binding methyltransferase superfamily. Cx-SAM synthase family. In terms of assembly, homodimer.

It catalyses the reaction prephenate + S-adenosyl-L-methionine = carboxy-S-adenosyl-L-methionine + 3-phenylpyruvate + H2O. In terms of biological role, catalyzes the conversion of S-adenosyl-L-methionine (SAM) to carboxy-S-adenosyl-L-methionine (Cx-SAM). This chain is Carboxy-S-adenosyl-L-methionine synthase, found in Pseudomonas savastanoi pv. phaseolicola (strain 1448A / Race 6) (Pseudomonas syringae pv. phaseolicola (strain 1448A / Race 6)).